The following is a 245-amino-acid chain: 23S rRNA (guanosine-2'-O-)-methyltransferase RlmB (245 aa).

S-adenosyl-L-methionine contacts are provided by Gly197, Ile217, and Leu226.

The protein belongs to the class IV-like SAM-binding methyltransferase superfamily. RNA methyltransferase TrmH family. RlmB subfamily.

The protein resides in the cytoplasm. The catalysed reaction is guanosine(2251) in 23S rRNA + S-adenosyl-L-methionine = 2'-O-methylguanosine(2251) in 23S rRNA + S-adenosyl-L-homocysteine + H(+). Functionally, specifically methylates the ribose of guanosine 2251 in 23S rRNA. The polypeptide is 23S rRNA (guanosine-2'-O-)-methyltransferase RlmB (Pasteurella multocida (strain Pm70)).